The sequence spans 224 residues: ATP-dependent dethiobiotin synthetase BioD (224 aa).

Residue threonine 18 coordinates Mg(2+). Residue lysine 39 is part of the active site. Serine 43 provides a ligand contact to substrate. Mg(2+) contacts are provided by aspartate 56 and glutamate 117. Residues aspartate 56, 117–120, and 177–178 contribute to the ATP site; these read EGVG and NE.

This sequence belongs to the dethiobiotin synthetase family. As to quaternary structure, homodimer. Mg(2+) is required as a cofactor.

It is found in the cytoplasm. It catalyses the reaction (7R,8S)-7,8-diammoniononanoate + CO2 + ATP = (4R,5S)-dethiobiotin + ADP + phosphate + 3 H(+). Its pathway is cofactor biosynthesis; biotin biosynthesis; biotin from 7,8-diaminononanoate: step 1/2. Functionally, catalyzes a mechanistically unusual reaction, the ATP-dependent insertion of CO2 between the N7 and N8 nitrogen atoms of 7,8-diaminopelargonic acid (DAPA, also called 7,8-diammoniononanoate) to form a ureido ring. This is ATP-dependent dethiobiotin synthetase BioD from Xanthomonas euvesicatoria pv. vesicatoria (strain 85-10) (Xanthomonas campestris pv. vesicatoria).